The sequence spans 729 residues: U-box domain-containing protein 17 (729 aa).

One can recognise a U-box domain in the interval 304–378 (TVPKDFVCPI…VQWCTASGIS (75 aa)). ARM repeat units follow at residues 438 to 477 (KENR…NLSI), 479 to 520 (EKNK…SLSA), 523 to 562 (EYKK…NLST), and 564 to 601 (PDNC…LLVR).

It carries out the reaction S-ubiquitinyl-[E2 ubiquitin-conjugating enzyme]-L-cysteine + [acceptor protein]-L-lysine = [E2 ubiquitin-conjugating enzyme]-L-cysteine + N(6)-ubiquitinyl-[acceptor protein]-L-lysine.. It functions in the pathway protein modification; protein ubiquitination. In terms of biological role, functions as an E3 ubiquitin ligase. The polypeptide is U-box domain-containing protein 17 (PUB17) (Arabidopsis thaliana (Mouse-ear cress)).